We begin with the raw amino-acid sequence, 444 residues long: Elongation factor 1-alpha (444 aa).

A tr-type G domain is found at 15 to 236 (KPHINLAVVG…VLDTFQPPPR (222 aa)). Residues 24–31 (GHVDNGKS) form a G1 region. 24–31 (GHVDNGKS) contributes to the GTP binding site. Ser-31 provides a ligand contact to Mg(2+). The interval 80-84 (GVTIE) is G2. Positions 101–104 (DLPG) are G3. Residues 101–105 (DLPGH) and 163–166 (NKMD) each bind GTP. Positions 163 to 166 (NKMD) are G4. The interval 202-204 (SAI) is G5.

This sequence belongs to the TRAFAC class translation factor GTPase superfamily. Classic translation factor GTPase family. EF-Tu/EF-1A subfamily.

The protein localises to the cytoplasm. It carries out the reaction GTP + H2O = GDP + phosphate + H(+). In terms of biological role, GTP hydrolase that promotes the GTP-dependent binding of aminoacyl-tRNA to the A-site of ribosomes during protein biosynthesis. The chain is Elongation factor 1-alpha from Pyrobaculum calidifontis (strain DSM 21063 / JCM 11548 / VA1).